The chain runs to 515 residues: Maturase K (515 aa).

It belongs to the intron maturase 2 family. MatK subfamily.

Its subcellular location is the plastid. It is found in the chloroplast. Usually encoded in the trnK tRNA gene intron. Probably assists in splicing its own and other chloroplast group II introns. The polypeptide is Maturase K (Pinus yunnanensis (Yunnan pine)).